The chain runs to 294 residues: 4-hydroxy-tetrahydrodipicolinate synthase (294 aa).

Residue T44 coordinates pyruvate. The active-site Proton donor/acceptor is the Y132. The Schiff-base intermediate with substrate role is filled by K161. I206 is a binding site for pyruvate.

This sequence belongs to the DapA family. Homotetramer; dimer of dimers.

It is found in the cytoplasm. It carries out the reaction L-aspartate 4-semialdehyde + pyruvate = (2S,4S)-4-hydroxy-2,3,4,5-tetrahydrodipicolinate + H2O + H(+). The protein operates within amino-acid biosynthesis; L-lysine biosynthesis via DAP pathway; (S)-tetrahydrodipicolinate from L-aspartate: step 3/4. Its function is as follows. Catalyzes the condensation of (S)-aspartate-beta-semialdehyde [(S)-ASA] and pyruvate to 4-hydroxy-tetrahydrodipicolinate (HTPA). The sequence is that of 4-hydroxy-tetrahydrodipicolinate synthase from Thermotoga sp. (strain RQ2).